The sequence spans 169 residues: 16S rRNA aminocarboxypropyltransferase (169 aa).

S-adenosyl-L-methionine-binding residues include T17, L67, L90, and T109.

Belongs to the TDD superfamily. TSR3 family.

The protein resides in the cytoplasm. The catalysed reaction is an N(1)-methylpseudouridine in rRNA + S-adenosyl-L-methionine = N(1)-methyl-N(3)-[(3S)-3-amino-3-carboxypropyl]pseudouridine in rRNA + S-methyl-5'-thioadenosine + H(+). Aminocarboxypropyltransferase that catalyzes the aminocarboxypropyl transfer on pseudouridine corresponding to position 914 in M.jannaschii 16S rRNA. It constitutes the last step in biosynthesis of the hypermodified N1-methyl-N3-(3-amino-3-carboxypropyl) pseudouridine (m1acp3-Psi). This Methanothermobacter thermautotrophicus (strain ATCC 29096 / DSM 1053 / JCM 10044 / NBRC 100330 / Delta H) (Methanobacterium thermoautotrophicum) protein is 16S rRNA aminocarboxypropyltransferase.